We begin with the raw amino-acid sequence, 573 residues long: Potassium-transporting ATPase potassium-binding subunit (573 aa).

10 consecutive transmembrane segments (helical) span residues 6-26 (ILFA…GSYI), 66-86 (FFSL…ILLL), 135-155 (ALAV…IALI), 177-197 (VFWI…FQGV), 257-277 (IQMV…GKWV), 283-303 (GWLI…VMTI), 382-402 (IFGG…LAVF), 428-448 (MFAL…AAVI), 493-513 (ITIA…VIML), and 537-557 (FIFA…TIFP).

The protein belongs to the KdpA family. As to quaternary structure, the system is composed of three essential subunits: KdpA, KdpB and KdpC.

It localises to the cell inner membrane. Its function is as follows. Part of the high-affinity ATP-driven potassium transport (or Kdp) system, which catalyzes the hydrolysis of ATP coupled with the electrogenic transport of potassium into the cytoplasm. This subunit binds the periplasmic potassium ions and delivers the ions to the membrane domain of KdpB through an intramembrane tunnel. The polypeptide is Potassium-transporting ATPase potassium-binding subunit (Francisella tularensis subsp. tularensis (strain WY96-3418)).